A 213-amino-acid polypeptide reads, in one-letter code: Kynurenine formamidase (213 aa).

Residue tryptophan 20 participates in substrate binding. 3 residues coordinate Zn(2+): histidine 50, histidine 54, and aspartate 56. Histidine 60 functions as the Proton donor/acceptor in the catalytic mechanism. Residues histidine 161 and glutamate 173 each contribute to the Zn(2+) site.

The protein belongs to the Cyclase 1 superfamily. KynB family. In terms of assembly, homodimer. Requires Zn(2+) as cofactor.

The catalysed reaction is N-formyl-L-kynurenine + H2O = L-kynurenine + formate + H(+). Its pathway is amino-acid degradation; L-tryptophan degradation via kynurenine pathway; L-kynurenine from L-tryptophan: step 2/2. Functionally, catalyzes the hydrolysis of N-formyl-L-kynurenine to L-kynurenine, the second step in the kynurenine pathway of tryptophan degradation. This Pseudomonas aeruginosa (strain UCBPP-PA14) protein is Kynurenine formamidase.